A 132-amino-acid chain; its full sequence is Small ribosomal subunit protein uS8 (132 aa).

The protein belongs to the universal ribosomal protein uS8 family. In terms of assembly, part of the 30S ribosomal subunit. Contacts proteins S5 and S12.

Its function is as follows. One of the primary rRNA binding proteins, it binds directly to 16S rRNA central domain where it helps coordinate assembly of the platform of the 30S subunit. The sequence is that of Small ribosomal subunit protein uS8 from Clostridium perfringens (strain ATCC 13124 / DSM 756 / JCM 1290 / NCIMB 6125 / NCTC 8237 / Type A).